The sequence spans 370 residues: Phospho-N-acetylmuramoyl-pentapeptide-transferase (370 aa).

10 helical membrane-spanning segments follow: residues 31 to 51 (LTSM…LYGL), 73 to 93 (TMGG…WGNL), 98 to 118 (IIVL…DDYM), 135 to 155 (LLSI…TGVI), 177 to 197 (GPVL…IIGS), 209 to 229 (GLAT…AYVS), 251 to 271 (VFLS…AHPA), 273 to 293 (VFMG…IVIL), 298 to 318 (ILLL…ILQV), and 347 to 367 (KIVI…LSTL).

Belongs to the glycosyltransferase 4 family. MraY subfamily. The cofactor is Mg(2+).

It localises to the cell inner membrane. It carries out the reaction UDP-N-acetyl-alpha-D-muramoyl-L-alanyl-gamma-D-glutamyl-meso-2,6-diaminopimeloyl-D-alanyl-D-alanine + di-trans,octa-cis-undecaprenyl phosphate = di-trans,octa-cis-undecaprenyl diphospho-N-acetyl-alpha-D-muramoyl-L-alanyl-D-glutamyl-meso-2,6-diaminopimeloyl-D-alanyl-D-alanine + UMP. Its pathway is cell wall biogenesis; peptidoglycan biosynthesis. Its function is as follows. Catalyzes the initial step of the lipid cycle reactions in the biosynthesis of the cell wall peptidoglycan: transfers peptidoglycan precursor phospho-MurNAc-pentapeptide from UDP-MurNAc-pentapeptide onto the lipid carrier undecaprenyl phosphate, yielding undecaprenyl-pyrophosphoryl-MurNAc-pentapeptide, known as lipid I. The protein is Phospho-N-acetylmuramoyl-pentapeptide-transferase of Leptospira borgpetersenii serovar Hardjo-bovis (strain JB197).